The sequence spans 1343 residues: ABC multidrug transporter atrD (1343 aa).

Positions 1–10 (MSPLETNPLS) are enriched in polar residues. Residues 1 to 67 (MSPLETNPLS…HRPKSSSSNN (67 aa)) form a disordered region. Low complexity predominate over residues 20–31 (ETSTTEEQASTP). The N-linked (GlcNAc...) asparagine glycan is linked to asparagine 99. 4 helical membrane-spanning segments follow: residues 114 to 134 (ILIM…LPLF), 163 to 183 (YFVY…VGFI), 235 to 255 (KVGL…IAYV), and 263 to 283 (ICSS…QFII). The region spanning 115–403 (LIMVISTICA…VSPNAQAFTN (289 aa)) is the ABC transmembrane type-1 1 domain. Residue asparagine 309 is glycosylated (N-linked (GlcNAc...) asparagine). 2 helical membrane passes run 339–359 (IVMG…YGLG) and 366–386 (FLVD…AILI). The ABC transporter 1 domain occupies 438–683 (IELRNVKHIY…GGAYRKLVEA (246 aa)). Residue 473–480 (GPSGSGKS) coordinates ATP. An N-linked (GlcNAc...) asparagine glycan is attached at asparagine 545. Transmembrane regions (helical) follow at residues 773-793 (MLIG…QAVL) and 820-840 (LMFF…GAAF). An ABC transmembrane type-1 2 domain is found at 774–1063 (LIGLVFSVLA…VFSFAPDMGK (290 aa)). N-linked (GlcNAc...) asparagine glycosylation occurs at asparagine 872. 4 consecutive transmembrane segments (helical) span residues 887-907 (HLSG…TTLG), 920-942 (LALV…FYML), 1010-1030 (ALVF…LGHH), and 1037-1057 (FFVC…VFSF). An N-linked (GlcNAc...) asparagine glycan is attached at asparagine 1083. An ABC transporter 2 domain is found at 1098–1336 (IEFRNVHFRY…KGRYYELVNL (239 aa)). 1133–1140 (GPSGCGKS) lines the ATP pocket.

It belongs to the ABC transporter superfamily. ABCB family. Multidrug resistance exporter (TC 3.A.1.201) subfamily.

Its subcellular location is the cell membrane. With respect to regulation, fenamirol efflux transporter activity is inhibited by the cyclosporin derivative PSC 833, nigericin, reserpine and valinomycin. The effect of reserpine is transiant, while that of the cyclosporin derivative PSC 833, nigericin and valinomycin is proportional to the time of exposure. Cyclohexinmide has inhibitory effect only when applied prior to addition of the fungicide. In terms of biological role, pleiotropic ABC efflux transporter involved in the protection of the cells against a wide range of toxic compounds. Confers resistance to the azole fenarimol via efflux transport. May also be involved in the secretion of penicillin. The sequence is that of ABC multidrug transporter atrD from Emericella nidulans (strain FGSC A4 / ATCC 38163 / CBS 112.46 / NRRL 194 / M139) (Aspergillus nidulans).